The following is a 1045-amino-acid chain: Elongation factor 3 (1045 aa).

Residues Ile-42, His-44, and Ser-83 each contribute to the ADP site. HEAT repeat units follow at residues 86–123 (PYVV…AVNP), 125–162 (AVKA…QAKS), 166–203 (LRMT…TVEN), 171–209 (LIPV…IERF), 205–241 (DIER…EVTP), 242–279 (ATLS…LVED), and 285–323 (PFLN…VGAV). Thr-392 and His-396 together coordinate ADP. 2 ABC transporter domains span residues 426–641 (EEGE…YYEL) and 667–993 (VKVS…KKED). 4 residues coordinate ADP: Asn-703, Glu-922, Asn-925, and His-951. Residues 975-1045 (GHNWVSGQGS…AYVSDDDADF (71 aa)) are disordered. The span at 1020–1031 (RKKKKERMKKKK) shows a compositional bias: basic residues.

The protein belongs to the ABC transporter superfamily. ABCF family. EF3 subfamily.

The protein localises to the cytoplasm. The protein resides in the cytosol. It carries out the reaction ATP + H2O = ADP + phosphate + H(+). Its pathway is protein biosynthesis; polypeptide chain elongation. Ribosome-dependent ATPase that functions in cytoplasmic translation elongation. Required for the ATP-dependent release of deacylated tRNA from the ribosomal E-site during protein biosynthesis. Stimulates the eEF1A-dependent binding of aminoacyl-tRNA to the ribosomal A-site, which has reduced affinity for tRNA as long as the E-site is occupied. Assists translation termination by stimulating the release of nascent protein from the ribosome by release factors. The protein is Elongation factor 3 of Zygosaccharomyces rouxii (strain ATCC 2623 / CBS 732 / NBRC 1130 / NCYC 568 / NRRL Y-229).